A 474-amino-acid chain; its full sequence is Aspartyl/glutamyl-tRNA(Asn/Gln) amidotransferase subunit B (474 aa).

The protein belongs to the GatB/GatE family. GatB subfamily. Heterotrimer of A, B and C subunits.

The enzyme catalyses L-glutamyl-tRNA(Gln) + L-glutamine + ATP + H2O = L-glutaminyl-tRNA(Gln) + L-glutamate + ADP + phosphate + H(+). It catalyses the reaction L-aspartyl-tRNA(Asn) + L-glutamine + ATP + H2O = L-asparaginyl-tRNA(Asn) + L-glutamate + ADP + phosphate + 2 H(+). Its function is as follows. Allows the formation of correctly charged Asn-tRNA(Asn) or Gln-tRNA(Gln) through the transamidation of misacylated Asp-tRNA(Asn) or Glu-tRNA(Gln) in organisms which lack either or both of asparaginyl-tRNA or glutaminyl-tRNA synthetases. The reaction takes place in the presence of glutamine and ATP through an activated phospho-Asp-tRNA(Asn) or phospho-Glu-tRNA(Gln). This Methanospirillum hungatei JF-1 (strain ATCC 27890 / DSM 864 / NBRC 100397 / JF-1) protein is Aspartyl/glutamyl-tRNA(Asn/Gln) amidotransferase subunit B.